A 68-amino-acid chain; its full sequence is Sec-independent protein translocase protein TatA (68 aa).

A helical membrane pass occupies residues 1-21 (MGSFSIWHWLIVLVVVLLLFG). The tract at residues 46-68 (EEAASADKTIDGKTVEHKSDEVR) is disordered. A compositionally biased stretch (basic and acidic residues) spans 53-68 (KTIDGKTVEHKSDEVR).

The protein belongs to the TatA/E family. The Tat system comprises two distinct complexes: a TatABC complex, containing multiple copies of TatA, TatB and TatC subunits, and a separate TatA complex, containing only TatA subunits. Substrates initially bind to the TatABC complex, which probably triggers association of the separate TatA complex to form the active translocon.

It localises to the cell inner membrane. Functionally, part of the twin-arginine translocation (Tat) system that transports large folded proteins containing a characteristic twin-arginine motif in their signal peptide across membranes. TatA could form the protein-conducting channel of the Tat system. This is Sec-independent protein translocase protein TatA from Sinorhizobium fredii (strain NBRC 101917 / NGR234).